The chain runs to 355 residues: Gentisate 1,2-dioxygenase (355 aa).

The Cupin type-2 domain occupies 106–174 (MQLLLPGEWA…GNEPVVWLDV (69 aa)).

This sequence belongs to the gentisate 1,2-dioxygenase family.

The enzyme catalyses 2,5-dihydroxybenzoate + O2 = 3-maleylpyruvate + H(+). It functions in the pathway aromatic compound metabolism; naphthalene degradation. Its function is as follows. Catalyzes the oxygen-dependent ring fission of gentisate between the carboxyl and proximal hydroxyl groups at positions 1 and 2 of the aromatic ring to form maleylpyruvate. Can also catalyze oxidation of alkyl- and halogenated gentisates. Exhibits higher affinity for 3-substituted gentisates than for gentisate but has higher activity with gentisate. This is Gentisate 1,2-dioxygenase from Ralstonia sp.